The primary structure comprises 55 residues: Large ribosomal subunit protein bL33 (55 aa).

This sequence belongs to the bacterial ribosomal protein bL33 family.

The sequence is that of Large ribosomal subunit protein bL33 from Mesorhizobium japonicum (strain LMG 29417 / CECT 9101 / MAFF 303099) (Mesorhizobium loti (strain MAFF 303099)).